Consider the following 777-residue polypeptide: Aminopeptidase P (777 aa).

A signal peptide spans 1–17 (MQLNFLLFVFIFLMVFH). H551 contributes to the substrate binding site. Residues D570 and D581 each coordinate Mn(2+). Substrate is bound at residue H640. H644 is a binding site for Mn(2+). Substrate is bound at residue H653. Mn(2+) contacts are provided by E676 and E690.

This sequence belongs to the peptidase M24B family. In terms of assembly, homodimer. Requires Mn(2+) as cofactor. The N-terminus may be proteolytically cleaved to generate a 73-kDa mature form.

The protein localises to the vacuole lumen. Its subcellular location is the cytoplasm. The catalysed reaction is Release of any N-terminal amino acid, including proline, that is linked to proline, even from a dipeptide or tripeptide.. Its activity is regulated as follows. Partially activated by Co(2+) and Mg(2+) has no effect. Inhibited by 1 mM Zn(2+), Ni(2+), or Cu(2+). Inhibited by apstatin, a non-hydrolysable peptide analog. Catalyzes the removal of a penultimate prolyl residue from the N-termini of peptides. In the food vacuole, involved in the final step of host hemoglobin catabolism, by cleaving hemoglobin-derived oligopeptides. In the cytoplasm, may be involved in the last steps of the turnover of ubiquitinated proteins. This chain is Aminopeptidase P, found in Plasmodium falciparum (isolate 3D7).